The sequence spans 256 residues: tRNA (guanine-N(7)-)-methyltransferase (256 aa).

Glutamate 85, glutamate 110, aspartate 137, and aspartate 159 together coordinate S-adenosyl-L-methionine. Aspartate 159 is an active-site residue. Residues lysine 163 and aspartate 195 each contribute to the substrate site.

The protein belongs to the class I-like SAM-binding methyltransferase superfamily. TrmB family.

The catalysed reaction is guanosine(46) in tRNA + S-adenosyl-L-methionine = N(7)-methylguanosine(46) in tRNA + S-adenosyl-L-homocysteine. The protein operates within tRNA modification; N(7)-methylguanine-tRNA biosynthesis. Its function is as follows. Catalyzes the formation of N(7)-methylguanine at position 46 (m7G46) in tRNA. In Rhodopseudomonas palustris (strain BisB5), this protein is tRNA (guanine-N(7)-)-methyltransferase.